The chain runs to 292 residues: Bifunctional protein FolD (292 aa).

NADP(+) contacts are provided by residues 166–168, Ser-191, and Ile-232; that span reads GRS.

The protein belongs to the tetrahydrofolate dehydrogenase/cyclohydrolase family. Homodimer.

The catalysed reaction is (6R)-5,10-methylene-5,6,7,8-tetrahydrofolate + NADP(+) = (6R)-5,10-methenyltetrahydrofolate + NADPH. The enzyme catalyses (6R)-5,10-methenyltetrahydrofolate + H2O = (6R)-10-formyltetrahydrofolate + H(+). Its pathway is one-carbon metabolism; tetrahydrofolate interconversion. In terms of biological role, catalyzes the oxidation of 5,10-methylenetetrahydrofolate to 5,10-methenyltetrahydrofolate and then the hydrolysis of 5,10-methenyltetrahydrofolate to 10-formyltetrahydrofolate. The sequence is that of Bifunctional protein FolD from Synechococcus sp. (strain RCC307).